Consider the following 601-residue polypeptide: Multidrug and toxin extrusion protein 2 (601 aa).

The Cytoplasmic portion of the chain corresponds to 1–62 (MNTAFAGFDE…PRGFWDEARA (62 aa)). A helical membrane pass occupies residues 63–83 (LFVLSGPLFLFQVLNFLTYVV). Over 84–95 (GTVFCGHLGKVE) the chain is Extracellular. The chain crosses the membrane as a helical span at residues 96–116 (LASVTLGVAFVNVCGVSVGAG). The Cytoplasmic segment spans residues 117-145 (LSSACDTLMSQSFGSPNKKHVGVILQRGS). The chain crosses the membrane as a helical span at residues 146 to 166 (LILLLCCLPCWALFLNTQHIL). At 167–182 (LLFRQDPAVSRLTQDY) the chain is on the extracellular side. The chain crosses the membrane as a helical span at residues 183–203 (AMIFIPGLPAIFLYSLLAKYL). Residues 204–212 (QNQGIVWPQ) are Cytoplasmic-facing. A helical transmembrane segment spans residues 213 to 233 (VLSGVVGNCVNGVANYALVSV). The Extracellular portion of the chain corresponds to 234-241 (LNLGVRGS). A helical membrane pass occupies residues 242-262 (AYANTISQFVQAAFLFLHIVL). Over 263 to 281 (KKLHLETWEGWSSQCLRDW) the chain is Cytoplasmic. A helical membrane pass occupies residues 282 to 301 (GPFLSLAIPSMLMMCVEWWA). Residues 302 to 320 (YEIGSFLMGLLGVVDLSGQ) lie on the Extracellular side of the membrane. The chain crosses the membrane as a helical span at residues 321–341 (AIIYEVATVVYMIPMGLGMAV). Over 342-361 (CVRVGTALGAADTLQAKRSA) the chain is Cytoplasmic. Residues 362–382 (VSGLLCTAGTSLVVGTLLGLL) traverse the membrane as a helical segment. The Extracellular segment spans residues 383-402 (NSQLGYIFTSDEEVIALVNQ). Residues 403–423 (VLPIYIVFQLVEAVCCVFGGV) form a helical membrane-spanning segment. Residues 424 to 437 (LRGTGKQAFGAIVN) are Cytoplasmic-facing. The chain crosses the membrane as a helical span at residues 438-458 (AIMYYIVGLPLGIVLTFVVGM). Residue R459 is a topological domain, extracellular. A helical membrane pass occupies residues 460–480 (IMGLWLGMLTCIFLAAVTFVV). The Cytoplasmic portion of the chain corresponds to 481–577 (YAVQLDWKLA…LSVRQLLFRR (97 aa)). A helical membrane pass occupies residues 578–598 (GAALAASVAVLMAGLLVRVLT). Residues 599-601 (TGY) are Extracellular-facing.

The protein belongs to the multi antimicrobial extrusion (MATE) (TC 2.A.66.1) family. Expressed in renal cortical tissues.

The protein resides in the cell membrane. It is found in the apical cell membrane. It carries out the reaction thiamine(out) + H(+)(in) = thiamine(in) + H(+)(out). The catalysed reaction is estrone 3-sulfate(in) + H(+)(out) = estrone 3-sulfate(out) + H(+)(in). The enzyme catalyses creatinine(in) + H(+)(out) = creatinine(out) + H(+)(in). Functionally, multidrug efflux pump that functions as a H(+)/organic cation antiporter. Mediates the efflux of cationic compounds, such as the model cations, tetraethylammonium (TEA) and 1-methyl-4-phenylpyridinium (MPP+), the platinum-based drug oxaliplatin or weak bases that are positively charged at physiological pH, cimetidine or the antidiabetic drug metformin. Mediates the efflux of the endogenous compounds creatinine, thiamine and estrone-3-sulfate. Plays a physiological role in the excretion of drugs, toxins and endogenous metabolites through the kidney. The protein is Multidrug and toxin extrusion protein 2 (SLC47A2) of Oryctolagus cuniculus (Rabbit).